Reading from the N-terminus, the 143-residue chain is Nucleoside diphosphate kinase (143 aa).

ATP is bound by residues Lys-11, Phe-59, Arg-87, Thr-93, Arg-104, and Asn-114. The active-site Pros-phosphohistidine intermediate is His-117.

The protein belongs to the NDK family. Homotetramer. Mg(2+) is required as a cofactor.

Its subcellular location is the cytoplasm. It catalyses the reaction a 2'-deoxyribonucleoside 5'-diphosphate + ATP = a 2'-deoxyribonucleoside 5'-triphosphate + ADP. The enzyme catalyses a ribonucleoside 5'-diphosphate + ATP = a ribonucleoside 5'-triphosphate + ADP. In terms of biological role, major role in the synthesis of nucleoside triphosphates other than ATP. The ATP gamma phosphate is transferred to the NDP beta phosphate via a ping-pong mechanism, using a phosphorylated active-site intermediate. In Klebsiella pneumoniae (strain 342), this protein is Nucleoside diphosphate kinase.